The chain runs to 217 residues: Somatotropin (217 aa).

The signal sequence occupies residues 1 to 26; it reads MMAAGPRTSLLLAFALLCLPWTQVVG. A Zn(2+)-binding site is contributed by His46. Residues Cys79 and Cys190 are joined by a disulfide bond. Ser132 is subject to Phosphoserine. Zn(2+) is bound at residue Glu199. The cysteines at positions 207 and 215 are disulfide-linked.

Belongs to the somatotropin/prolactin family.

The protein localises to the secreted. In terms of biological role, plays an important role in growth control. Its major role in stimulating body growth is to stimulate the liver and other tissues to secrete IGF1. It stimulates both the differentiation and proliferation of myoblasts. It also stimulates amino acid uptake and protein synthesis in muscle and other tissues. The polypeptide is Somatotropin (GH1) (Bubalus bubalis (Domestic water buffalo)).